A 427-amino-acid polypeptide reads, in one-letter code: 3-phosphoshikimate 1-carboxyvinyltransferase (427 aa).

Residues K22, S23, and R27 each contribute to the 3-phosphoshikimate site. K22 is a phosphoenolpyruvate binding site. Phosphoenolpyruvate contacts are provided by G96 and R124. Residues S170, S171, Q172, S198, D313, N336, and K340 each contribute to the 3-phosphoshikimate site. Q172 serves as a coordination point for phosphoenolpyruvate. The active-site Proton acceptor is D313. Phosphoenolpyruvate contacts are provided by R344, R386, and K411.

It belongs to the EPSP synthase family. Monomer.

It localises to the cytoplasm. The enzyme catalyses 3-phosphoshikimate + phosphoenolpyruvate = 5-O-(1-carboxyvinyl)-3-phosphoshikimate + phosphate. It participates in metabolic intermediate biosynthesis; chorismate biosynthesis; chorismate from D-erythrose 4-phosphate and phosphoenolpyruvate: step 6/7. Functionally, catalyzes the transfer of the enolpyruvyl moiety of phosphoenolpyruvate (PEP) to the 5-hydroxyl of shikimate-3-phosphate (S3P) to produce enolpyruvyl shikimate-3-phosphate and inorganic phosphate. The protein is 3-phosphoshikimate 1-carboxyvinyltransferase of Aeromonas salmonicida (strain A449).